Reading from the N-terminus, the 511-residue chain is Coatomer subunit delta (511 aa).

Over residues 168–177 (QARRDAERQG) the composition is skewed to basic and acidic residues. Positions 168–196 (QARRDAERQGKKAPGFGGFGSSTVSGGST) are disordered. Ser-223 is subject to Phosphoserine. N6-acetyllysine is present on residues Lys-233 and Lys-241. Phosphoserine is present on Ser-244. The region spanning 271–511 (MESVHMKIEE…TFLVDKYEIL (241 aa)) is the MHD domain. N6-acetyllysine is present on residues Lys-309 and Lys-351. Phosphoserine is present on Ser-493.

This sequence belongs to the adaptor complexes medium subunit family. Delta-COP subfamily. As to quaternary structure, oligomeric complex that consists of at least the alpha, beta, beta', gamma, delta, epsilon and zeta subunits. In terms of tissue distribution, ubiquitously expressed.

Its subcellular location is the cytoplasm. The protein resides in the golgi apparatus membrane. It is found in the cytoplasmic vesicle. The protein localises to the COPI-coated vesicle membrane. The coatomer is a cytosolic protein complex that binds to dilysine motifs and reversibly associates with Golgi non-clathrin-coated vesicles, which further mediate biosynthetic protein transport from the ER, via the Golgi up to the trans Golgi network. Coatomer complex is required for budding from Golgi membranes, and is essential for the retrograde Golgi-to-ER transport of dilysine-tagged proteins. In mammals, the coatomer can only be recruited by membranes associated to ADP-ribosylation factors (ARFs), which are small GTP-binding proteins; the complex also influences the Golgi structural integrity, as well as the processing, activity, and endocytic recycling of LDL receptors. This Bos taurus (Bovine) protein is Coatomer subunit delta (ARCN1).